A 198-amino-acid polypeptide reads, in one-letter code: dITP/XTP pyrophosphatase (198 aa).

8–13 (TKNKGK) contributes to the substrate binding site. The Proton acceptor role is filled by aspartate 69. Residue aspartate 69 participates in Mg(2+) binding. Residues serine 70, 152 to 155 (FGYD), lysine 175, and 180 to 181 (HR) contribute to the substrate site.

The protein belongs to the HAM1 NTPase family. In terms of assembly, homodimer. It depends on Mg(2+) as a cofactor.

The catalysed reaction is XTP + H2O = XMP + diphosphate + H(+). It catalyses the reaction dITP + H2O = dIMP + diphosphate + H(+). It carries out the reaction ITP + H2O = IMP + diphosphate + H(+). Functionally, pyrophosphatase that catalyzes the hydrolysis of nucleoside triphosphates to their monophosphate derivatives, with a high preference for the non-canonical purine nucleotides XTP (xanthosine triphosphate), dITP (deoxyinosine triphosphate) and ITP. Seems to function as a house-cleaning enzyme that removes non-canonical purine nucleotides from the nucleotide pool, thus preventing their incorporation into DNA/RNA and avoiding chromosomal lesions. The protein is dITP/XTP pyrophosphatase of Shouchella clausii (strain KSM-K16) (Alkalihalobacillus clausii).